The primary structure comprises 359 residues: Putative mannose-1-phosphate guanyltransferase (359 aa).

This sequence belongs to the transferase hexapeptide repeat family.

The catalysed reaction is alpha-D-mannose 1-phosphate + GTP + H(+) = GDP-alpha-D-mannose + diphosphate. In Sulfolobus acidocaldarius (strain ATCC 33909 / DSM 639 / JCM 8929 / NBRC 15157 / NCIMB 11770), this protein is Putative mannose-1-phosphate guanyltransferase (mpg1).